Reading from the N-terminus, the 88-residue chain is UPF0250 protein Shew_2940 (88 aa).

It belongs to the UPF0250 family.

This Shewanella loihica (strain ATCC BAA-1088 / PV-4) protein is UPF0250 protein Shew_2940.